We begin with the raw amino-acid sequence, 181 residues long: Histone deacetylase complex subunit SAP30L-B (181 aa).

2 disulfides stabilise this stretch: Cys26–Cys27 and Cys35–Cys71. The Atypical zinc finger occupies 26 to 74; sequence CCLIDGGERCPRPAGNASFSKRVQKSISQKKLKLDIDKSVRHLYICDFH. The interval 82-103 is disordered; that stretch reads RNKRKRKTSDDGGDSPEHETDV. The Nuclear localization signal (NLS) signature appears at 83–88; the sequence is NKRKRK. Residues 85–87 are important for DNA and phosphoinositide binding; that stretch reads RKR.

Belongs to the SAP30 family. As to quaternary structure, interacts with components of the histone deacetylase complex sin3a, hdac1 and hdac2. Binds histones and nucleosomes.

The protein resides in the nucleus. It localises to the nucleolus. Functionally, functions as a transcription repressor, probably via its interaction with histone deacetylase complexes. Involved in the functional recruitment of the class 1 Sin3-histone deacetylase complex (HDAC) to the nucleolus. Binds DNA, apparently without sequence-specificity, and bends bound double-stranded DNA. Binds phosphoinositol phosphates (phosphoinositol 3-phosphate, phosphoinositol 4-phosphate and phosphoinositol 5-phosphate) via the same basic sequence motif that mediates DNA binding and nuclear import. This chain is Histone deacetylase complex subunit SAP30L-B (sap30l-b), found in Xenopus laevis (African clawed frog).